Here is a 252-residue protein sequence, read N- to C-terminus: 5-oxoprolinase subunit A (252 aa).

The protein belongs to the LamB/PxpA family. In terms of assembly, forms a complex composed of PxpA, PxpB and PxpC.

The catalysed reaction is 5-oxo-L-proline + ATP + 2 H2O = L-glutamate + ADP + phosphate + H(+). In terms of biological role, catalyzes the cleavage of 5-oxoproline to form L-glutamate coupled to the hydrolysis of ATP to ADP and inorganic phosphate. The polypeptide is 5-oxoprolinase subunit A (Staphylococcus saprophyticus subsp. saprophyticus (strain ATCC 15305 / DSM 20229 / NCIMB 8711 / NCTC 7292 / S-41)).